The following is a 259-amino-acid chain: uncharacterized protein (259 aa).

A divalent metal cation contacts are provided by His9, His11, Glu97, His133, His157, and Asp207.

Belongs to the metallo-dependent hydrolases superfamily. TatD-type hydrolase family. A divalent metal cation is required as a cofactor.

This is an uncharacterized protein from Escherichia coli (strain K12).